A 455-amino-acid chain; its full sequence is L-serine dehydratase (455 aa).

It belongs to the iron-sulfur dependent L-serine dehydratase family. The cofactor is [4Fe-4S] cluster.

The catalysed reaction is L-serine = pyruvate + NH4(+). Its pathway is carbohydrate biosynthesis; gluconeogenesis. This Helicobacter pylori (strain J99 / ATCC 700824) (Campylobacter pylori J99) protein is L-serine dehydratase (sdaA).